A 171-amino-acid polypeptide reads, in one-letter code: NADH-ubiquinone oxidoreductase chain 6 (171 aa).

The next 5 membrane-spanning stretches (helical) occupy residues 1-21 (MYVMFLLSILLVLGFVSISSK), 25-44 (IYGGVGLIVSGAVGCGIIMG), 49-71 (FMGLMVFLIYLGGMLVVFGYTTA), 85-105 (VVIWGVVLLGVGMELFMVAWM), and 150-170 (WFAAIAGWSLFISVLIVIEII).

This sequence belongs to the complex I subunit 6 family. As to quaternary structure, core subunit of respiratory chain NADH dehydrogenase (Complex I) which is composed of 45 different subunits.

The protein localises to the mitochondrion inner membrane. It carries out the reaction a ubiquinone + NADH + 5 H(+)(in) = a ubiquinol + NAD(+) + 4 H(+)(out). Core subunit of the mitochondrial membrane respiratory chain NADH dehydrogenase (Complex I) which catalyzes electron transfer from NADH through the respiratory chain, using ubiquinone as an electron acceptor. Essential for the catalytic activity and assembly of complex I. The chain is NADH-ubiquinone oxidoreductase chain 6 (MT-ND6) from Lemur catta (Ring-tailed lemur).